Consider the following 62-residue polypeptide: RRCFNHPSSQPQTNKSCPPGENSCYNKQWRDHRGTIIERGCGCPQVKSGIKLRCCQSDDCNN.

Polar residues predominate over residues 1–16 (RRCFNHPSSQPQTNKS). The interval 1–21 (RRCFNHPSSQPQTNKSCPPGE) is disordered. Cystine bridges form between Cys-3-Cys-24, Cys-17-Cys-41, Cys-43-Cys-54, and Cys-55-Cys-60.

Belongs to the three-finger toxin family. Short-chain subfamily. Type I alpha-neurotoxin sub-subfamily. As to expression, expressed by the venom gland.

It localises to the secreted. Its function is as follows. Binds to muscle nicotinic acetylcholine receptor (nAChR) and inhibit acetylcholine from binding to the receptor, thereby impairing neuromuscular transmission. This chain is Short neurotoxin B, found in Laticauda crockeri (Crocker's sea snake).